The following is a 365-amino-acid chain: Large ribosomal subunit protein uL3 (365 aa).

Residues 343–365 form a disordered region; sequence RPPKKKPPVQRPQITYVSVESKQ. Residues 354–365 are compositionally biased toward polar residues; the sequence is PQITYVSVESKQ.

It belongs to the universal ribosomal protein uL3 family. As to quaternary structure, part of the 50S ribosomal subunit. Forms a cluster with proteins L14 and L24e.

In terms of biological role, one of the primary rRNA binding proteins, it binds directly near the 3'-end of the 23S rRNA, where it nucleates assembly of the 50S subunit. The protein is Large ribosomal subunit protein uL3 of Pyrococcus furiosus (strain ATCC 43587 / DSM 3638 / JCM 8422 / Vc1).